The chain runs to 417 residues: Histidine--tRNA ligase (417 aa).

This sequence belongs to the class-II aminoacyl-tRNA synthetase family.

It is found in the cytoplasm. The enzyme catalyses tRNA(His) + L-histidine + ATP = L-histidyl-tRNA(His) + AMP + diphosphate + H(+). This chain is Histidine--tRNA ligase, found in Pyrobaculum neutrophilum (strain DSM 2338 / JCM 9278 / NBRC 100436 / V24Sta) (Thermoproteus neutrophilus).